The following is a 177-amino-acid chain: MERINTTFYKTKVIPQLQQKYSYSNVHQIPKLRSIHLNRCLGAVSQKIFQKSSEEIAMISGQRPKITYAKKAIAGFQIRKGMPIGMTVTLRRERMYDFLTKFIHLILPRLKDFRGLNPTSFDGNGNYHMGLPDQLAFPEIDYDQIDQYRGMDISIITTAKTDEEAKFLLEALGMRFQ.

This sequence belongs to the universal ribosomal protein uL5 family. Part of the 50S ribosomal subunit; contacts the 5S rRNA.

The protein resides in the plastid. The protein localises to the chloroplast. Its function is as follows. Binds 5S rRNA, forms part of the central protuberance of the 50S subunit. This is Large ribosomal subunit protein uL5c (rpl5) from Cyanidioschyzon merolae (strain NIES-3377 / 10D) (Unicellular red alga).